The chain runs to 319 residues: 4-hydroxy-3-methylbut-2-enyl diphosphate reductase (319 aa).

Cys18 lines the [4Fe-4S] cluster pocket. (2E)-4-hydroxy-3-methylbut-2-enyl diphosphate-binding residues include His47 and His81. 2 residues coordinate dimethylallyl diphosphate: His47 and His81. Isopentenyl diphosphate contacts are provided by His47 and His81. Residue Cys103 participates in [4Fe-4S] cluster binding. His131 is a (2E)-4-hydroxy-3-methylbut-2-enyl diphosphate binding site. His131 lines the dimethylallyl diphosphate pocket. His131 contributes to the isopentenyl diphosphate binding site. The active-site Proton donor is the Glu133. Residue Thr172 participates in (2E)-4-hydroxy-3-methylbut-2-enyl diphosphate binding. A [4Fe-4S] cluster-binding site is contributed by Cys202. (2E)-4-hydroxy-3-methylbut-2-enyl diphosphate-binding residues include Ser230, Ser231, Asn232, and Ser275. Dimethylallyl diphosphate-binding residues include Ser230, Ser231, Asn232, and Ser275. 4 residues coordinate isopentenyl diphosphate: Ser230, Ser231, Asn232, and Ser275.

The protein belongs to the IspH family. [4Fe-4S] cluster is required as a cofactor.

It carries out the reaction isopentenyl diphosphate + 2 oxidized [2Fe-2S]-[ferredoxin] + H2O = (2E)-4-hydroxy-3-methylbut-2-enyl diphosphate + 2 reduced [2Fe-2S]-[ferredoxin] + 2 H(+). It catalyses the reaction dimethylallyl diphosphate + 2 oxidized [2Fe-2S]-[ferredoxin] + H2O = (2E)-4-hydroxy-3-methylbut-2-enyl diphosphate + 2 reduced [2Fe-2S]-[ferredoxin] + 2 H(+). It participates in isoprenoid biosynthesis; dimethylallyl diphosphate biosynthesis; dimethylallyl diphosphate from (2E)-4-hydroxy-3-methylbutenyl diphosphate: step 1/1. It functions in the pathway isoprenoid biosynthesis; isopentenyl diphosphate biosynthesis via DXP pathway; isopentenyl diphosphate from 1-deoxy-D-xylulose 5-phosphate: step 6/6. Functionally, catalyzes the conversion of 1-hydroxy-2-methyl-2-(E)-butenyl 4-diphosphate (HMBPP) into a mixture of isopentenyl diphosphate (IPP) and dimethylallyl diphosphate (DMAPP). Acts in the terminal step of the DOXP/MEP pathway for isoprenoid precursor biosynthesis. The chain is 4-hydroxy-3-methylbut-2-enyl diphosphate reductase from Beijerinckia indica subsp. indica (strain ATCC 9039 / DSM 1715 / NCIMB 8712).